A 30-amino-acid chain; its full sequence is V-type proton ATPase catalytic subunit A isoform 1 (30 aa).

Belongs to the ATPase alpha/beta chains family. In terms of assembly, V-ATPase is a heteromultimeric enzyme composed of a peripheral catalytic V1 complex (main components: subunits A, B, C, D, E, and F) attached to an integral membrane V0 proton pore complex (main component: the proteolipid protein).

The catalysed reaction is ATP + H2O + 4 H(+)(in) = ADP + phosphate + 5 H(+)(out). Its function is as follows. Catalytic subunit of the peripheral V1 complex of vacuolar ATPase. V-ATPase vacuolar ATPase is responsible for acidifying a variety of intracellular compartments in eukaryotic cells. The sequence is that of V-type proton ATPase catalytic subunit A isoform 1 from Equisetum arvense (Field horsetail).